Consider the following 679-residue polypeptide: Glycine--tRNA ligase beta subunit (679 aa).

Belongs to the class-II aminoacyl-tRNA synthetase family. As to quaternary structure, tetramer of two alpha and two beta subunits.

Its subcellular location is the cytoplasm. It catalyses the reaction tRNA(Gly) + glycine + ATP = glycyl-tRNA(Gly) + AMP + diphosphate. The polypeptide is Glycine--tRNA ligase beta subunit (Streptococcus agalactiae serotype Ia (strain ATCC 27591 / A909 / CDC SS700)).